An 869-amino-acid polypeptide reads, in one-letter code: Valine--tRNA ligase (869 aa).

Residues P47–N57 carry the 'HIGH' region motif. A 'KMSKS' region motif is present at residues K521–S525. Position 524 (K524) interacts with ATP.

The protein belongs to the class-I aminoacyl-tRNA synthetase family. ValS type 2 subfamily.

The protein resides in the cytoplasm. It carries out the reaction tRNA(Val) + L-valine + ATP = L-valyl-tRNA(Val) + AMP + diphosphate. Its function is as follows. Catalyzes the attachment of valine to tRNA(Val). As ValRS can inadvertently accommodate and process structurally similar amino acids such as threonine, to avoid such errors, it has a 'posttransfer' editing activity that hydrolyzes mischarged Thr-tRNA(Val) in a tRNA-dependent manner. This chain is Valine--tRNA ligase, found in Methanosarcina barkeri (strain Fusaro / DSM 804).